The following is a 257-amino-acid chain: UPF0246 protein YaaA (257 aa).

The protein belongs to the UPF0246 family.

This chain is UPF0246 protein YaaA, found in Salmonella agona (strain SL483).